A 248-amino-acid chain; its full sequence is Cell division protein ZapD (248 aa).

The protein belongs to the ZapD family. In terms of assembly, interacts with FtsZ.

It localises to the cytoplasm. In terms of biological role, cell division factor that enhances FtsZ-ring assembly. Directly interacts with FtsZ and promotes bundling of FtsZ protofilaments, with a reduction in FtsZ GTPase activity. The sequence is that of Cell division protein ZapD from Aliivibrio fischeri (strain ATCC 700601 / ES114) (Vibrio fischeri).